The following is a 512-amino-acid chain: Centrosomal protein CCDC61 (512 aa).

Met1 is modified (N-acetylmethionine). The tract at residues 1–142 is head domain; that stretch reads MEQPAGLQVD…PLPLPYQGKP (142 aa). 2 coiled-coil regions span residues 176-203 and 246-273; these read WHLR…REEA and RRLA…NCEL. Thr282 bears the Phosphothreonine mark. Disordered regions lie at residues 282–415 and 430–472; these read TLPA…SFRS and SQSV…HLAS. Residues 287–300 are compositionally biased toward basic and acidic residues; the sequence is AREDRALSSRERST. Phosphoserine is present on residues Ser328, Ser330, Ser372, and Ser375. Positions 406-415 are enriched in low complexity; the sequence is RSSSVDSFRS. Residues Ser447 and Ser473 each carry the phosphoserine modification.

Belongs to the CCDC61 family. Forms homodimers (via head domain). Interacts with CEP170. Interacts with PCM1 and CEP131. Binds tubulin.

It localises to the cytoplasm. Its subcellular location is the cytoskeleton. The protein resides in the microtubule organizing center. It is found in the centrosome. The protein localises to the centriolar satellite. It localises to the cilium basal body. Microtubule-binding centrosomal protein required for centriole cohesion, independently of the centrosome-associated protein/CEP250 and rootletin/CROCC linker. In interphase, required for anchoring microtubule at the mother centriole subdistal appendages and for centrosome positioning. During mitosis, may be involved in spindle assembly and chromatin alignment by regulating the organization of spindle microtubules into a symmetrical structure. Plays a non-essential role in ciliogenesis. The protein is Centrosomal protein CCDC61 of Rattus norvegicus (Rat).